Here is a 491-residue protein sequence, read N- to C-terminus: 3-octaprenyl-4-hydroxybenzoate carboxy-lyase (491 aa).

Asn172 lines the Mn(2+) pocket. Residues 175 to 177 (IYR), 189 to 191 (RWL), and 194 to 195 (RG) contribute to the prenylated FMN site. Glu238 provides a ligand contact to Mn(2+). Residue Asp287 is the Proton donor of the active site.

The protein belongs to the UbiD family. Homohexamer. Requires prenylated FMN as cofactor. Mn(2+) is required as a cofactor.

Its subcellular location is the cell membrane. It carries out the reaction a 4-hydroxy-3-(all-trans-polyprenyl)benzoate + H(+) = a 2-(all-trans-polyprenyl)phenol + CO2. It functions in the pathway cofactor biosynthesis; ubiquinone biosynthesis. Catalyzes the decarboxylation of 3-octaprenyl-4-hydroxy benzoate to 2-octaprenylphenol, an intermediate step in ubiquinone biosynthesis. In Alcanivorax borkumensis (strain ATCC 700651 / DSM 11573 / NCIMB 13689 / SK2), this protein is 3-octaprenyl-4-hydroxybenzoate carboxy-lyase.